Reading from the N-terminus, the 244-residue chain is tRNA pseudouridine synthase A 2 (244 aa).

Catalysis depends on Asp52, which acts as the Nucleophile. Tyr110 provides a ligand contact to substrate.

It belongs to the tRNA pseudouridine synthase TruA family. Homodimer.

It carries out the reaction uridine(38/39/40) in tRNA = pseudouridine(38/39/40) in tRNA. Formation of pseudouridine at positions 38, 39 and 40 in the anticodon stem and loop of transfer RNAs. This Clostridium perfringens (strain 13 / Type A) protein is tRNA pseudouridine synthase A 2.